The chain runs to 140 residues: FAD synthase (140 aa).

Residues 9 to 10 (TF), 14 to 17 (HPGH), and Asp-92 contribute to the ATP site.

It belongs to the archaeal FAD synthase family. As to quaternary structure, homodimer. A divalent metal cation is required as a cofactor.

The enzyme catalyses FMN + ATP + H(+) = FAD + diphosphate. The protein operates within cofactor biosynthesis; FAD biosynthesis; FAD from FMN: step 1/1. In terms of biological role, catalyzes the transfer of the AMP portion of ATP to flavin mononucleotide (FMN) to produce flavin adenine dinucleotide (FAD) coenzyme. In Natronomonas pharaonis (strain ATCC 35678 / DSM 2160 / CIP 103997 / JCM 8858 / NBRC 14720 / NCIMB 2260 / Gabara) (Halobacterium pharaonis), this protein is FAD synthase.